Consider the following 659-residue polypeptide: Nitrate import ATP-binding protein NrtC (659 aa).

The 235-residue stretch at Leu-5 to Glu-239 folds into the ABC transporter domain. Gly-42–Ser-49 provides a ligand contact to ATP. The linker stretch occupies residues Gln-255 to Gln-278. The tract at residues Lys-279–Ala-659 is nrtA-like.

It belongs to the ABC transporter superfamily. Nitrate/nitrite/cyanate uptake transporter (NitT) (TC 3.A.1.16) family. The complex is composed of two ATP-binding proteins (NrtC and NrtD), two transmembrane proteins (NrtB) and a solute-binding protein (NrtA).

It localises to the cell inner membrane. The catalysed reaction is nitrate(out) + ATP + H2O = nitrate(in) + ADP + phosphate + H(+). Transport is inhibited by ammonium. The C-terminal domain of NrtC is involved in the ammonium-promoted inhibition of the nitrate/nitrite transporter. Part of the ABC transporter complex NrtABCD involved in nitrate uptake. The complex is probably also involved in nitrite transport. Probably responsible for energy coupling to the transport system. In Synechococcus elongatus (strain ATCC 33912 / PCC 7942 / FACHB-805) (Anacystis nidulans R2), this protein is Nitrate import ATP-binding protein NrtC.